We begin with the raw amino-acid sequence, 274 residues long: NH(3)-dependent NAD(+) synthetase (274 aa).

Residue 46–53 (GISGGQDS) participates in ATP binding. Aspartate 52 contributes to the Mg(2+) binding site. Arginine 140 contacts deamido-NAD(+). Threonine 160 is a binding site for ATP. Glutamate 165 contributes to the Mg(2+) binding site. Residues lysine 173 and aspartate 180 each coordinate deamido-NAD(+). ATP contacts are provided by lysine 189 and threonine 211. 260-261 (HK) contributes to the deamido-NAD(+) binding site.

Belongs to the NAD synthetase family. As to quaternary structure, homodimer.

It catalyses the reaction deamido-NAD(+) + NH4(+) + ATP = AMP + diphosphate + NAD(+) + H(+). It functions in the pathway cofactor biosynthesis; NAD(+) biosynthesis; NAD(+) from deamido-NAD(+) (ammonia route): step 1/1. Its function is as follows. Catalyzes the ATP-dependent amidation of deamido-NAD to form NAD. Uses ammonia as a nitrogen source. The protein is NH(3)-dependent NAD(+) synthetase of Lactococcus lactis subsp. cremoris (strain SK11).